A 495-amino-acid polypeptide reads, in one-letter code: UDP-N-acetylmuramoyl-L-alanyl-D-glutamate--2,6-diaminopimelate ligase (495 aa).

Residues Leu-27, Ser-29, and 44–46 (HQA) each bind UDP-N-acetyl-alpha-D-muramoyl-L-alanyl-D-glutamate. ATP is bound at residue 116 to 122 (GTNGKTT). UDP-N-acetyl-alpha-D-muramoyl-L-alanyl-D-glutamate contacts are provided by residues Asn-157, 158–159 (TT), Ser-185, Gln-191, and Arg-193. An N6-carboxylysine modification is found at Lys-225. Residues Arg-390, 414 to 417 (DNPR), Gly-465, and Glu-469 contribute to the meso-2,6-diaminopimelate site. A Meso-diaminopimelate recognition motif motif is present at residues 414–417 (DNPR).

This sequence belongs to the MurCDEF family. MurE subfamily. It depends on Mg(2+) as a cofactor. Carboxylation is probably crucial for Mg(2+) binding and, consequently, for the gamma-phosphate positioning of ATP.

It is found in the cytoplasm. It carries out the reaction UDP-N-acetyl-alpha-D-muramoyl-L-alanyl-D-glutamate + meso-2,6-diaminopimelate + ATP = UDP-N-acetyl-alpha-D-muramoyl-L-alanyl-gamma-D-glutamyl-meso-2,6-diaminopimelate + ADP + phosphate + H(+). It functions in the pathway cell wall biogenesis; peptidoglycan biosynthesis. Catalyzes the addition of meso-diaminopimelic acid to the nucleotide precursor UDP-N-acetylmuramoyl-L-alanyl-D-glutamate (UMAG) in the biosynthesis of bacterial cell-wall peptidoglycan. The protein is UDP-N-acetylmuramoyl-L-alanyl-D-glutamate--2,6-diaminopimelate ligase of Salmonella choleraesuis (strain SC-B67).